The primary structure comprises 231 residues: Protein OPG061 (231 aa).

It belongs to the orthopoxvirus OPG058 family.

The protein resides in the host nucleus. It is found in the host nucleolus. The polypeptide is Protein OPG061 (OPG061) (Vaccinia virus (strain Western Reserve) (VACV)).